Consider the following 440-residue polypeptide: Xylose isomerase (440 aa).

Active-site residues include His100 and Asp103. Mg(2+) is bound by residues Glu231, Glu267, His270, Asp295, Asp306, Asp308, and Asp338.

Belongs to the xylose isomerase family. As to quaternary structure, homotetramer. It depends on Mg(2+) as a cofactor.

It is found in the cytoplasm. The catalysed reaction is alpha-D-xylose = alpha-D-xylulofuranose. The protein is Xylose isomerase of Burkholderia orbicola (strain MC0-3).